The following is a 1291-amino-acid chain: Cytoplasmic FMR1-interacting protein (1291 aa).

The tract at residues 1270 to 1291 (PSVISSSSHYQDPQKLRQSINN) is disordered. Positions 1271–1291 (SVISSSSHYQDPQKLRQSINN) are enriched in polar residues.

Belongs to the CYFIP family. As to quaternary structure, interacts with Fmr1 and Rac1. Component of the WAVE complex composed of Hem/Kette, Scar/Wave and Cyfip where it binds through its C-terminus directly to Hem. As to expression, in the embryo, expressed mainly in the gut and in the developing central nervous system where high levels of expression are found in the CNS neuropile. Expression in the gut diminishes as development proceeds (at protein level). In the adult, expressed specifically in the nervous system.

Its subcellular location is the cytoplasm. Functionally, plays a role in guidance and morphology of central and peripheral axons and in synaptic morphology. Also required for formation of cell membrane protrusions and for bristle development. Plays a role in regulating mitochondrial activity, energy metabolism and membrane potential which maintains normal gamma-aminobutyric acid (GABA) signaling and ensures normal social behavior. This chain is Cytoplasmic FMR1-interacting protein, found in Drosophila melanogaster (Fruit fly).